A 289-amino-acid chain; its full sequence is Heme oxygenase 1 (289 aa).

Topologically, residues 1 to 266 (MERPQLDSMS…SQISTSSSQT (266 aa)) are cytoplasmic. Residues K18, H25, Y134, and R183 each contribute to the heme b site. The segment at 225–261 (HKDQSPSQTEFLRQRPASLVQDTTSAETPRGKSQIST) is disordered. Residues S229 and S242 each carry the phosphoserine modification. The span at 244–261 (VQDTTSAETPRGKSQIST) shows a compositional bias: polar residues. Residues 267 to 289 (PLLRWVLTLSFLLATVAVGIYAM) traverse the membrane as a helical; Anchor for type IV membrane protein segment.

The protein belongs to the heme oxygenase family. In terms of assembly, homodimer and higher order homooligomer. Oligomerization is crucial for its stability and function in the endoplasmic reticulum. Interacts with FLVCR2; this interaction is potentiated in the presence of heme. A soluble form arises by proteolytic removal of the membrane anchor.

Its subcellular location is the endoplasmic reticulum membrane. It catalyses the reaction heme b + 3 reduced [NADPH--hemoprotein reductase] + 3 O2 = biliverdin IXalpha + CO + Fe(2+) + 3 oxidized [NADPH--hemoprotein reductase] + 3 H2O + H(+). With respect to regulation, inhibited by metalloporphyrins such as Sn- and Zn-protoporphyrins. In terms of biological role, catalyzes the oxidative cleavage of heme at the alpha-methene bridge carbon, released as carbon monoxide (CO), to generate biliverdin IXalpha, while releasing the central heme iron chelate as ferrous iron. Affords protection against programmed cell death and this cytoprotective effect relies on its ability to catabolize free heme and prevent it from sensitizing cells to undergo apoptosis. Functionally, catalyzes the oxidative cleavage of heme at the alpha-methene bridge carbon, released as carbon monoxide (CO), to generate biliverdin IXalpha, while releasing the central heme iron chelate as ferrous iron. In Rattus norvegicus (Rat), this protein is Heme oxygenase 1 (Hmox1).